The primary structure comprises 367 residues: WD repeat-containing protein 31 (367 aa).

WD repeat units follow at residues 53 to 90 (AFQE…AYNW), 94 to 132 (NVVK…MWDL), 137 to 175 (QPRQ…LWDV), 179 to 217 (QSVE…LWDS), 221 to 264 (QVAH…LWDL), 269 to 311 (NRIC…IWNQ), and 315 to 353 (ACLF…LLRM).

The polypeptide is WD repeat-containing protein 31 (WDR31) (Homo sapiens (Human)).